The chain runs to 212 residues: External core antigen (212 aa).

Positions 1-19 (MQLFHLCLIISCSCPTVQA) are cleaved as a signal peptide. Residues 25–27 (GWL) are HBEAG. The interval 179–212 (RQRGRTIRRRTPSPRRRRSQSPRRRRSQSRESQC) is disordered. The segment covering 180-205 (QRGRTIRRRTPSPRRRRSQSPRRRRS) has biased composition (basic residues). The stretch at 184–190 (TIRRRTP) is one 1; half-length repeat. The tract at residues 184 to 206 (TIRRRTPSPRRRRSQSPRRRRSQ) is 3 X 8 AA repeats of S-P-R-R-R-R-S-Q. Residues 184–212 (TIRRRTPSPRRRRSQSPRRRRSQSRESQC) constitute a propeptide that is removed on maturation. Repeat copies occupy residues 191–198 (SPRRRRSQ) and 199–206 (SPRRRRSQ).

Belongs to the orthohepadnavirus precore antigen family. Homodimerizes. In terms of processing, phosphorylated. Post-translationally, cleaved by host furin.

Its subcellular location is the secreted. The protein localises to the host nucleus. In terms of biological role, may regulate immune response to the intracellular capsid in acting as a T-cell tolerogen, by having an immunoregulatory effect which prevents destruction of infected cells by cytotoxic T-cells. This immune regulation may predispose to chronicity during perinatal infections and prevent severe liver injury during adult infections. The protein is External core antigen of Hepatitis B virus genotype D subtype ayw (isolate Australia/AustKW/1991) (HBV-D).